The following is a 151-amino-acid chain: Ubiquitin-like protein 4A-B (151 aa).

In terms of domain architecture, Ubiquitin-like spans 1-76 (MILTIKPLKG…LNLVVRPAGE (76 aa)).

In terms of assembly, component of the BAT3 complex.

It is found in the cytoplasm. It localises to the cytosol. Its function is as follows. Component of the BAT3 complex, a multiprotein complex involved in the post-translational delivery of tail-anchored (TA) membrane proteins to the endoplasmic reticulum membrane. TA membrane proteins, also named type II transmembrane proteins, contain a single C-terminal transmembrane region. The chain is Ubiquitin-like protein 4A-B (ubl4ab) from Oncorhynchus mykiss (Rainbow trout).